The sequence spans 371 residues: tRNA-specific 2-thiouridylase MnmA (371 aa).

ATP-binding positions include 13–20 (GMSGGVDS) and Met-39. An interaction with target base in tRNA region spans residues 99 to 101 (NPD). Residue Cys-104 is the Nucleophile of the active site. Residues Cys-104 and Cys-200 are joined by a disulfide bond. Residue Gly-128 coordinates ATP. The tract at residues 150–152 (KDQ) is interaction with tRNA. Cys-200 acts as the Cysteine persulfide intermediate in catalysis. The interval 309-310 (RY) is interaction with tRNA.

It belongs to the MnmA/TRMU family.

The protein localises to the cytoplasm. It carries out the reaction S-sulfanyl-L-cysteinyl-[protein] + uridine(34) in tRNA + AH2 + ATP = 2-thiouridine(34) in tRNA + L-cysteinyl-[protein] + A + AMP + diphosphate + H(+). Catalyzes the 2-thiolation of uridine at the wobble position (U34) of tRNA, leading to the formation of s(2)U34. The chain is tRNA-specific 2-thiouridylase MnmA from Bacillus velezensis (strain DSM 23117 / BGSC 10A6 / LMG 26770 / FZB42) (Bacillus amyloliquefaciens subsp. plantarum).